A 339-amino-acid chain; its full sequence is DNA-directed RNA polymerase subunit alpha (339 aa).

Residues 1–233 (MVREEVAGST…DLFLPFLHAE (233 aa)) are alpha N-terminal domain (alpha-NTD). The segment at 264–339 (KKGIPLNCIF…IDLLKNKLSF (76 aa)) is alpha C-terminal domain (alpha-CTD).

The protein belongs to the RNA polymerase alpha chain family. In terms of assembly, in plastids the minimal PEP RNA polymerase catalytic core is composed of four subunits: alpha, beta, beta', and beta''. When a (nuclear-encoded) sigma factor is associated with the core the holoenzyme is formed, which can initiate transcription.

It is found in the plastid. The protein resides in the chloroplast. It catalyses the reaction RNA(n) + a ribonucleoside 5'-triphosphate = RNA(n+1) + diphosphate. Functionally, DNA-dependent RNA polymerase catalyzes the transcription of DNA into RNA using the four ribonucleoside triphosphates as substrates. This chain is DNA-directed RNA polymerase subunit alpha, found in Aegilops uniaristata (Goatgrass).